A 75-amino-acid polypeptide reads, in one-letter code: Guanine nucleotide-binding protein G(I)/G(S)/G(O) subunit gamma-3 (75 aa).

The residue at position 5 (T5) is a Phosphothreonine. Residue S9 is modified to Phosphoserine. T10 bears the Phosphothreonine mark. Phosphoserine is present on S12. C72 carries the post-translational modification Cysteine methyl ester. The S-geranylgeranyl cysteine moiety is linked to residue C72. Positions 73-75 are cleaved as a propeptide — removed in mature form; that stretch reads ALL.

The protein belongs to the G protein gamma family. G proteins are composed of 3 units, alpha, beta and gamma. Forms a complex with GNAO1 and GNB1. Interacts with SCN8A. Abundantly expressed in brain. Low levels in testis.

The protein resides in the cell membrane. In terms of biological role, guanine nucleotide-binding proteins (G proteins) are involved as a modulator or transducer in various transmembrane signaling systems. The beta and gamma chains are required for the GTPase activity, for replacement of GDP by GTP, and for G protein-effector interaction. This Bos taurus (Bovine) protein is Guanine nucleotide-binding protein G(I)/G(S)/G(O) subunit gamma-3 (GNG3).